The chain runs to 1404 residues: DNA-directed RNA polymerase subunit beta' (1404 aa).

Zn(2+) is bound by residues Cys70, Cys72, Cys85, and Cys88. Asp460, Asp462, and Asp464 together coordinate Mg(2+). 4 residues coordinate Zn(2+): Cys814, Cys888, Cys895, and Cys898.

Belongs to the RNA polymerase beta' chain family. As to quaternary structure, the RNAP catalytic core consists of 2 alpha, 1 beta, 1 beta' and 1 omega subunit. When a sigma factor is associated with the core the holoenzyme is formed, which can initiate transcription. It depends on Mg(2+) as a cofactor. Zn(2+) serves as cofactor.

The enzyme catalyses RNA(n) + a ribonucleoside 5'-triphosphate = RNA(n+1) + diphosphate. Its function is as follows. DNA-dependent RNA polymerase catalyzes the transcription of DNA into RNA using the four ribonucleoside triphosphates as substrates. This chain is DNA-directed RNA polymerase subunit beta', found in Shewanella amazonensis (strain ATCC BAA-1098 / SB2B).